The following is a 240-amino-acid chain: Allene oxide cyclase, chloroplastic (240 aa).

The N-terminal 49 residues, 1-49, are a transit peptide targeting the chloroplast; it reads MAAAAPSRVSVRAAAPGQTGGFAKIRPQVVVAAAARSAGVSGRRARSVR.

The protein belongs to the allene oxide cyclase family.

Its subcellular location is the plastid. It localises to the chloroplast. The catalysed reaction is (9Z,13S,15Z)-12,13-epoxyoctadeca-9,11,15-trienoate = (9S,13S,15Z)-12-oxophyto-10,15-dienoate. The protein operates within lipid metabolism; polyunsaturated fatty acid biosynthesis. Functionally, involved in the production of 12-oxo-phytodienoic acid (OPDA), a precursor of jasmonic acid (JA). Required for the production of JA in response to wounding. Necessary for flower and coleoptile development regulation by light, including blue (BL), red (RL) and far red (FR) lights. Involved in the auxin-mediated signaling pathway leading to growth stimulation. Essential for photodestruction of phyA upon activation by RL and FR. Implicated in responses to salt stress (NaCl). Confers resistance to incompatible strains of the blast fungus Magnaporthe grisea, jasmonic acid (JA) thus playing a significant role in the resistance to fungal infection. Implicated in riboflavin-induced resistance to the sheath blight Rhizoctonia solani. Required for Pseudomonas fluorescens-mediated JA-dependent induced systemic resistance (ISR). Confers some resistance, independently of the JA pathway but probably via OPDA accumulation, to brown planthopper (BPH, Nilaparvata lugens), a destructive, monophagous, piercing-sucking insect, mainly by reducing its feeding activity and survival rate. Triggers resistance to the chewing insect striped stem borer (SSB) Chilo suppressalis, to the root hemiparasite witchweed Striga hermonthica, and to the root feeder insect rice water weevil Lissorhoptrus oryzophilus, in a JA-dependent manner, by attenuating both the growth mass and growth rate of caterpillars. In Oryza sativa subsp. indica (Rice), this protein is Allene oxide cyclase, chloroplastic.